A 459-amino-acid chain; its full sequence is N-chimaerin (459 aa).

Ala-2 is modified (N-acetylalanine). The region spanning 49 to 135 is the SH2 domain; that stretch reads EFHGMISREA…IETKAAEYIA (87 aa). Thr-192 is subject to Phosphothreonine. A Phorbol-ester/DAG-type zinc finger spans residues 205-255; sequence IHNFKVHTFRGPHWCEYCANFMWGLIAQGVKCADCGLNVHKQCSKMVPNDC. One can recognise a Rho-GAP domain in the interval 268 to 459; the sequence is CDLTTLVKAH…LLIKNEDILF (192 aa). Thr-340 carries the phosphothreonine modification.

In terms of assembly, interacts with EPHA4; effector of EPHA4 in axon guidance linking EPHA4 activation to RAC1 regulation. Post-translationally, phosphorylated. Phosphorylation is EPHA4 kinase activity-dependent. In terms of tissue distribution, in neurons in brain regions that are involved in learning and memory processes.

In terms of biological role, GTPase-activating protein for p21-rac and a phorbol ester receptor. Involved in the assembly of neuronal locomotor circuits as a direct effector of EPHA4 in axon guidance. In Homo sapiens (Human), this protein is N-chimaerin (CHN1).